Consider the following 233-residue polypeptide: MAKVGKRLKAAHEGIDREAFYDLPQAVHLIRERATAKFDESIEVAMNLGVDPRHADQMVRGVVELPHGTGKTMRVAVFAKGAKAEEAKAAGADLVGADELAADIQNGTIDFDRCIATPDMMGVVGRLGKVLGPRGLMPNPKLGTVTMDVATAVKAAKAGQVQFRVEKSGIVHAGVGRASFTEEKLVDNVRAFVDAINKAKPTGAKGTYLKKVSLSSTMGPGLKVNLGTISGAA.

Belongs to the universal ribosomal protein uL1 family. As to quaternary structure, part of the 50S ribosomal subunit.

In terms of biological role, binds directly to 23S rRNA. The L1 stalk is quite mobile in the ribosome, and is involved in E site tRNA release. Protein L1 is also a translational repressor protein, it controls the translation of the L11 operon by binding to its mRNA. The chain is Large ribosomal subunit protein uL1 from Rhodospirillum rubrum (strain ATCC 11170 / ATH 1.1.1 / DSM 467 / LMG 4362 / NCIMB 8255 / S1).